A 186-amino-acid chain; its full sequence is Probable peptidoglycan L,D-endopeptidase MepK (186 aa).

Positions 1-30 (MNYVDQNKRKWLSLGGIALGISILPNSVLA) are cleaved as a signal peptide. Zn(2+) is bound by residues His134, Asp141, and His174.

It belongs to the peptidase M15 family. It depends on Zn(2+) as a cofactor.

Its pathway is cell wall biogenesis; cell wall polysaccharide biosynthesis. Functionally, l,D-endopeptidase that cleaves meso-diaminopimelic acid (mDAP)-mDAP cross-links in peptidoglycan. It works in conjunction with other elongation-specific D,D-endopeptidases to make space for efficient incorporation of nascent peptidoglycan strands into the sacculus and thus enable cell wall expansion. The polypeptide is Probable peptidoglycan L,D-endopeptidase MepK (Haemophilus influenzae (strain ATCC 51907 / DSM 11121 / KW20 / Rd)).